The sequence spans 439 residues: Taxadien-5-alpha-ol O-acetyltransferase (439 aa).

Active-site proton acceptor residues include H164 and D373.

It belongs to the plant acyltransferase family.

The catalysed reaction is taxa-4(20),11-dien-5alpha-ol + acetyl-CoA = taxa-4(20),11-dien-5alpha-yl acetate + CoA. Its pathway is alkaloid biosynthesis; taxol biosynthesis; 10-deacetyl-2-debenzoylbaccatin III from taxa-4(20),11-dien-5alpha-ol: step 1/3. The protein is Taxadien-5-alpha-ol O-acetyltransferase (TAT) of Taxus cuspidata (Japanese yew).